The primary structure comprises 366 residues: NADH-quinone oxidoreductase subunit D (366 aa).

This sequence belongs to the complex I 49 kDa subunit family. In terms of assembly, NDH-1 is composed of 14 different subunits. Subunits NuoB, C, D, E, F, and G constitute the peripheral sector of the complex.

The protein resides in the cell membrane. It carries out the reaction a quinone + NADH + 5 H(+)(in) = a quinol + NAD(+) + 4 H(+)(out). Its function is as follows. NDH-1 shuttles electrons from NADH, via FMN and iron-sulfur (Fe-S) centers, to quinones in the respiratory chain. The immediate electron acceptor for the enzyme in this species is believed to be a menaquinone. Couples the redox reaction to proton translocation (for every two electrons transferred, four hydrogen ions are translocated across the cytoplasmic membrane), and thus conserves the redox energy in a proton gradient. The chain is NADH-quinone oxidoreductase subunit D from Bacillus cereus (strain ATCC 10987 / NRS 248).